The sequence spans 303 residues: Endo-1,3;1,4-beta-D-glucanase (303 aa).

Positions 1–43 (MPSSAQVLLCLAAVLAAAAATTAEAHSQCLDNPPDRSIHGRQL) are cleaved as a signal peptide. 3 N-linked (GlcNAc...) asparagine glycosylation sites follow: Asn-115, Asn-197, and Asn-257.

Glycosylated.

The protein resides in the secreted. In terms of biological role, plays a role in control of plant growth. Mediates specific degradation of cell wall (1,3)(1,4)-beta-D-glucans and is related to auxin-mediated growth and development of cereal coleoptiles. This is Endo-1,3;1,4-beta-D-glucanase from Zea mays (Maize).